A 798-amino-acid chain; its full sequence is Protocadherin beta-13 (798 aa).

A signal peptide spans 1-28 (MEASGKLICRQRQVLFSFLLLGLSLAGA). At 29-690 (AEPRSYSVVE…AQADSLTVYL (662 aa)) the chain is on the extracellular side. Cadherin domains lie at 36-134 (VVEE…SPVF), 139-243 (MLVK…APEF), 248-348 (YRVQ…APEV), 353-451 (FTSP…APAF), and 456-561 (YTLF…SPFV). 2 N-linked (GlcNAc...) asparagine glycosylation sites follow: Asn418 and Asn436. N-linked (GlcNAc...) asparagine glycosylation is present at Asn567. Residues 568–671 (GSAPCTELVP…LVDGFSQPYL (104 aa)) enclose the Cadherin 6 domain. Residues 691–711 (VVALASVSSLFLFSVLLFVAV) form a helical membrane-spanning segment. Over 712-798 (RLCRRSRAAS…FPNNFGFNIQ (87 aa)) the chain is Cytoplasmic.

Its subcellular location is the cell membrane. Its function is as follows. Potential calcium-dependent cell-adhesion protein. May be involved in the establishment and maintenance of specific neuronal connections in the brain. The chain is Protocadherin beta-13 (PCDHB13) from Pan troglodytes (Chimpanzee).